The chain runs to 787 residues: ISWI one complex protein 3 (787 aa).

Residues 1–22 (MDSPSNSIQNLQQEAQGSSSAQ) show a composition bias toward polar residues. 3 disordered regions span residues 1 to 137 (MDSP…AHEQ), 672 to 693 (ILEQ…LPKD), and 749 to 787 (TEYD…RQRT). Positions 40–50 (DQSVSVSQSSD) are enriched in low complexity. Basic residues predominate over residues 79 to 92 (KPKRKRPAPPKKKA). A compositionally biased stretch (basic and acidic residues) spans 100–137 (SNDKVEKKKTTSIAKDGKPTLKTNDKKVAPKPKPAHEQ). A compositionally biased stretch (polar residues) spans 675 to 689 (QKSTTDNNPSINTNP). Over residues 751 to 777 (YDSEEYVDDEEDDEADIYDDNDNDSSF) the composition is skewed to acidic residues. Basic and acidic residues predominate over residues 778–787 (DDGRVKRQRT).

In terms of assembly, component of the ISW1A complex, which at least consists of ISW1 and IOC3.

It is found in the nucleus. Functions as a component of the ISW1A complex, which acts in remodeling the chromatin by catalyzing an ATP-dependent alteration in the structure of nucleosomal DNA. The ISW1A complex represses gene expression at initiation through specific positioning of a promoter proximal dinucleosome. This Saccharomyces cerevisiae (strain ATCC 204508 / S288c) (Baker's yeast) protein is ISWI one complex protein 3 (IOC3).